We begin with the raw amino-acid sequence, 72 residues long: Translation initiation factor IF-1 (72 aa).

The S1-like domain occupies 1–72 (MAKEDCIEME…TKGRIKFRSK (72 aa)).

The protein belongs to the IF-1 family. As to quaternary structure, component of the 30S ribosomal translation pre-initiation complex which assembles on the 30S ribosome in the order IF-2 and IF-3, IF-1 and N-formylmethionyl-tRNA(fMet); mRNA recruitment can occur at any time during PIC assembly.

The protein resides in the cytoplasm. Its function is as follows. One of the essential components for the initiation of protein synthesis. Stabilizes the binding of IF-2 and IF-3 on the 30S subunit to which N-formylmethionyl-tRNA(fMet) subsequently binds. Helps modulate mRNA selection, yielding the 30S pre-initiation complex (PIC). Upon addition of the 50S ribosomal subunit IF-1, IF-2 and IF-3 are released leaving the mature 70S translation initiation complex. This chain is Translation initiation factor IF-1, found in Francisella tularensis subsp. tularensis (strain WY96-3418).